A 251-amino-acid polypeptide reads, in one-letter code: Demethylmenaquinone methyltransferase (251 aa).

S-adenosyl-L-methionine-binding positions include Thr-66, Asp-87, and 115 to 116; that span reads NA.

This sequence belongs to the class I-like SAM-binding methyltransferase superfamily. MenG/UbiE family.

The catalysed reaction is a 2-demethylmenaquinol + S-adenosyl-L-methionine = a menaquinol + S-adenosyl-L-homocysteine + H(+). It participates in quinol/quinone metabolism; menaquinone biosynthesis; menaquinol from 1,4-dihydroxy-2-naphthoate: step 2/2. Its function is as follows. Methyltransferase required for the conversion of demethylmenaquinol (DMKH2) to menaquinol (MKH2). This chain is Demethylmenaquinone methyltransferase, found in Symbiobacterium thermophilum (strain DSM 24528 / JCM 14929 / IAM 14863 / T).